The primary structure comprises 285 residues: Protoheme IX farnesyltransferase (285 aa).

The next 9 helical transmembrane spans lie at 13–33 (LGKL…AFLA), 40–60 (LLPI…AMII), 89–109 (EAII…FIDN), 110–130 (ILTA…YTIL), 137–157 (LNIV…YTSL), 165–185 (GFLL…SLAL), 194–214 (AHYP…AIAI), 230–252 (INLI…SYRL), and 265–285 (FIFS…VKLI).

Belongs to the UbiA prenyltransferase family. Protoheme IX farnesyltransferase subfamily.

It localises to the cell membrane. The enzyme catalyses heme b + (2E,6E)-farnesyl diphosphate + H2O = Fe(II)-heme o + diphosphate. It functions in the pathway porphyrin-containing compound metabolism; heme O biosynthesis; heme O from protoheme: step 1/1. In terms of biological role, converts heme B (protoheme IX) to heme O by substitution of the vinyl group on carbon 2 of heme B porphyrin ring with a hydroxyethyl farnesyl side group. In Saccharolobus islandicus (strain Y.N.15.51 / Yellowstone #2) (Sulfolobus islandicus), this protein is Protoheme IX farnesyltransferase.